A 274-amino-acid chain; its full sequence is Dermonecrotic toxin SdSicTox-betaIIB1biii (274 aa).

Histidine 5 is a catalytic residue. Residues glutamate 25 and aspartate 27 each coordinate Mg(2+). The active-site Nucleophile is the histidine 41. 2 disulfide bridges follow: cysteine 45–cysteine 51 and cysteine 47–cysteine 190. Aspartate 85 is a Mg(2+) binding site.

This sequence belongs to the arthropod phospholipase D family. Class II subfamily. It depends on Mg(2+) as a cofactor. As to expression, expressed by the venom gland.

It is found in the secreted. It catalyses the reaction an N-(acyl)-sphingosylphosphocholine = an N-(acyl)-sphingosyl-1,3-cyclic phosphate + choline. The catalysed reaction is an N-(acyl)-sphingosylphosphoethanolamine = an N-(acyl)-sphingosyl-1,3-cyclic phosphate + ethanolamine. It carries out the reaction a 1-acyl-sn-glycero-3-phosphocholine = a 1-acyl-sn-glycero-2,3-cyclic phosphate + choline. The enzyme catalyses a 1-acyl-sn-glycero-3-phosphoethanolamine = a 1-acyl-sn-glycero-2,3-cyclic phosphate + ethanolamine. Its function is as follows. Dermonecrotic toxins cleave the phosphodiester linkage between the phosphate and headgroup of certain phospholipids (sphingolipid and lysolipid substrates), forming an alcohol (often choline) and a cyclic phosphate. This toxin acts on sphingomyelin (SM). It may also act on ceramide phosphoethanolamine (CPE), lysophosphatidylcholine (LPC) and lysophosphatidylethanolamine (LPE), but not on lysophosphatidylserine (LPS), and lysophosphatidylglycerol (LPG). It acts by transphosphatidylation, releasing exclusively cyclic phosphate products as second products. Induces dermonecrosis, hemolysis, increased vascular permeability, edema, inflammatory response, and platelet aggregation. The sequence is that of Dermonecrotic toxin SdSicTox-betaIIB1biii from Sicarius cf. damarensis (strain GJB-2008) (Six-eyed sand spider).